A 532-amino-acid chain; its full sequence is MTFLLLLLFCFLSPAISSAHSIPSTLDGPFVPVTVPLDTSLRGQAIDLPDTDPRVRRRVIGFEPEQISLSLSSDHDSIWVSWITGEFQIGKKVKPLDPTSINSVVQFGTLRHSLSHEAKGHSLVYSQLYPFDGLLNYTSGIIHHVRITGLKPSTIYYYRCGDPSRRAMSKIHHFRTMPVSSPSSYPGRIAVVGDLGLTYNTTDTISHLIHNSPDLILLIGDVSYANLYLTNGTSSDCYSCSFPETPIHETYQPRWDYWGRFMENLTSKVPLMVIEGNHEIELQAENKTFEAYSSRFAFPFNESGSSSTLYYSFNAGGIHFVMLGAYIAYDKSAEQYEWLKKDLAKVDRSVTPWLVASWHPPWYSSYTAHYREAECMKEAMEELLYSYGTDIVFNGHVHAYERSNRVYNYELDPCGPVYIVIGDGGNREKMAIEHADDPGKCPEPLTTPDPVMGGFCAWNFTPSDKFCWDRQPDYSALRESSFGHGILEMKNETWALWTWYRNQDSSSEVGDQIYIVRQPDRCPLHHRLVNHC.

The N-terminal stretch at 1–19 (MTFLLLLLFCFLSPAISSA) is a signal peptide. Asparagine 136 is a glycosylation site (N-linked (GlcNAc...) asparagine). Residue aspartate 194 participates in Fe cation binding. N-linked (GlcNAc...) asparagine glycosylation occurs at asparagine 200. Aspartate 221 and tyrosine 224 together coordinate Fe cation. Aspartate 221 contributes to the Zn(2+) binding site. N-linked (GlcNAc...) asparagine glycans are attached at residues asparagine 231 and asparagine 264. Asparagine 277 lines the Zn(2+) pocket. Residue asparagine 277 coordinates substrate. 2 N-linked (GlcNAc...) asparagine glycosylation sites follow: asparagine 286 and asparagine 301. Histidine 359 lines the Zn(2+) pocket. Histidine 369 acts as the Proton donor in catalysis. A Zn(2+)-binding site is contributed by histidine 396. A substrate-binding site is contributed by 396 to 398 (HVH). Residue histidine 398 coordinates Fe cation. N-linked (GlcNAc...) asparagine glycosylation occurs at asparagine 491.

It belongs to the metallophosphoesterase superfamily. Purple acid phosphatase family. Homodimer. Fe cation is required as a cofactor. Requires Zn(2+) as cofactor. As to expression, expressed in roots, stems, cotyledons, leaves, flowers and siliques.

The protein resides in the secreted. It catalyses the reaction 1D-myo-inositol hexakisphosphate + H2O = 1D-myo-inositol 1,2,3,5,6-pentakisphosphate + phosphate. The enzyme catalyses a phosphate monoester + H2O = an alcohol + phosphate. Acid phosphatase activity with p-nitrophenyl phosphate (pNPP), D-myoinositol 1-phosphate (Ins(1)P1), phytic acid and Myo-inositol hexakisphosphate. Low or no activity with Glc-6-P and ATP. Confers shoot growth stimulation, enhanced salt and osmotic stress tolerance, and ABA insensitivity. May modulate ascorbic acid (AsA) levels by controlling the input of myoinositol into this branch of AsA biosynthesis. This is Purple acid phosphatase 15 (PAP15) from Arabidopsis thaliana (Mouse-ear cress).